Reading from the N-terminus, the 199-residue chain is UPF0329 protein ECU01_0120/ECU01_1490/ECU08_0050 (199 aa).

The protein belongs to the UPF0329 family.

In Encephalitozoon cuniculi (strain GB-M1) (Microsporidian parasite), this protein is UPF0329 protein ECU01_0120/ECU01_1490/ECU08_0050.